Reading from the N-terminus, the 369-residue chain is N-succinyl-L-Arg/Lys racemase (369 aa).

Substrate contacts are provided by residues tyrosine 26, aspartate 51, lysine 161 to lysine 163, and aspartate 191 to asparagine 193. Aspartate 191, glutamate 218, and aspartate 243 together coordinate Mg(2+). Substrate-binding positions include lysine 267, serine 295–methionine 296, and glutamate 320–threonine 322.

Belongs to the mandelate racemase/muconate lactonizing enzyme family. Mg(2+) is required as a cofactor.

In terms of biological role, catalyzes efficient racemization of N-succinyl-L-Arg and N-succinyl-L-Lys, suggesting that these are physiological substrates of this enzyme. Has low activity with L-Asp-L-Lys, and even lower activity with L-Leu-L-Arg, L-Leu-L-Lys, N-succinyl-L-His and N-succinyl-L-Met (in vitro). The sequence is that of N-succinyl-L-Arg/Lys racemase from Bacillus cereus (strain ATCC 14579 / DSM 31 / CCUG 7414 / JCM 2152 / NBRC 15305 / NCIMB 9373 / NCTC 2599 / NRRL B-3711).